Here is a 231-residue protein sequence, read N- to C-terminus: MPLRIILLGLPGAGKGTQADFIAKHLDIPKISTGDMLRAAVKAKTPLGLEVKKIMESGGLVSDEIMIALVKERVKLPDCHKGYLLDGFPRTLAQADALNAAAIKIDLVIEIDVPEEEIIERMTGRLIHPASGRTYHRRYNPPKVADKDDVTGEPLIQRADDREETVRHRLAVYRKQTSPLSDYYAQWEKSGDPQAPKYFRISGLGSMEEVRERILQVFEAYDPRDSGNLEH.

12–17 (GAGKGT) is a binding site for ATP. Residues 32–61 (STGDMLRAAVKAKTPLGLEVKKIMESGGLV) are NMP. Residues Thr-33, Arg-38, 59–61 (GLV), 87–90 (GFPR), and Gln-94 contribute to the AMP site. Residues 124 to 161 (GRLIHPASGRTYHRRYNPPKVADKDDVTGEPLIQRADD) form an LID region. Residues Arg-125 and 134–135 (TY) contribute to the ATP site. The AMP site is built by Arg-158 and Arg-169. Gly-205 provides a ligand contact to ATP.

This sequence belongs to the adenylate kinase family. As to quaternary structure, monomer.

The protein resides in the cytoplasm. The enzyme catalyses AMP + ATP = 2 ADP. Its pathway is purine metabolism; AMP biosynthesis via salvage pathway; AMP from ADP: step 1/1. Its function is as follows. Catalyzes the reversible transfer of the terminal phosphate group between ATP and AMP. Plays an important role in cellular energy homeostasis and in adenine nucleotide metabolism. The sequence is that of Adenylate kinase from Coxiella burnetii (strain CbuK_Q154) (Coxiella burnetii (strain Q154)).